Consider the following 78-residue polypeptide: Glycophorin-E (78 aa).

The N-terminal stretch at 1–19 (MYGKIIFVLLLSGIVSISA) is a signal peptide. Residues 20–52 (SSTTGVAMHTSTSSSVTKSYISSQTNGITLINW) lie on the Extracellular side of the membrane. A helical membrane pass occupies residues 53–73 (WAMARVIFEVMLVVVGMIILI). Residues 74–78 (SYCIR) lie on the Cytoplasmic side of the membrane.

It belongs to the glycophorin-A family. The N-terminal extracellular domain is heavily glycosylated on serine and threonine residues. Erythrocytes.

Its subcellular location is the membrane. In terms of biological role, this protein is a minor sialoglycoprotein in human erythrocyte membranes. In Homo sapiens (Human), this protein is Glycophorin-E (GYPE).